Reading from the N-terminus, the 1218-residue chain is Protein jagged-1 (1218 aa).

The N-terminal stretch at 1 to 33 (MRSPRTRGRPGRPLSLLLALLCALRAKVCGASG) is a signal peptide. The Extracellular portion of the chain corresponds to 34-1067 (QFELEILSMQ…QRRPLKNRTD (1034 aa)). N-linked (GlcNAc...) asparagine glycosylation is present at Asn143. The region spanning 185 to 229 (VTCDDHYYGFGCNKFCRPRDDFFGHYACDQNGNKTCMEGWMGPDC) is the DSL domain. Cystine bridges form between Cys187-Cys196 and Cys200-Cys212. The tract at residues 199-207 (FCRPRDDFF) is important for interaction with NOTCH1. Asn217 carries N-linked (GlcNAc...) asparagine glycosylation. 40 disulfide bridges follow: Cys220–Cys229, Cys234–Cys245, Cys238–Cys251, Cys253–Cys262, Cys265–Cys276, Cys271–Cys282, Cys284–Cys293, Cys300–Cys312, Cys306–Cys322, Cys324–Cys333, Cys340–Cys351, Cys345–Cys360, Cys362–Cys371, Cys378–Cys389, Cys383–Cys398, Cys400–Cys409, Cys416–Cys427, Cys421–Cys436, Cys438–Cys447, Cys454–Cys464, Cys458–Cys473, Cys475–Cys484, Cys491–Cys502, Cys496–Cys511, Cys513–Cys522, Cys529–Cys540, Cys534–Cys549, Cys551–Cys560, Cys578–Cys605, Cys599–Cys615, Cys617–Cys626, Cys633–Cys644, Cys638–Cys653, Cys655–Cys664, Cys671–Cys682, Cys676–Cys691, Cys693–Cys702, Cys709–Cys720, Cys714–Cys729, and Cys731–Cys740. The 34-residue stretch at 230-263 (NKAICRQGCSPKHGSCKLPGDCRCQYGWQGLYCD) folds into the EGF-like 1 domain. The 31-residue stretch at 264–294 (KCIPHPGCVHGTCNEPWQCLCETNWGGQLCD) folds into the EGF-like 2; atypical domain. 2 consecutive EGF-like domains span residues 296 to 334 (DLNYCGTHQPCLNRGTCSNTGPDKYQCSCPEGYSGPNCE) and 336 to 372 (AEHACLSDPCHNRGSCKETSSGFECECSPGWTGPTCS). One can recognise an EGF-like 5; calcium-binding domain in the interval 374 to 410 (NIDDCSPNNCSHGGTCQDLVNGFKCVCPPQWTGKTCQ). The N-linked (GlcNAc...) asparagine glycan is linked to Asn382. The region spanning 412–448 (DANECEAKPCVNARSCKNLIASYYCDCLPGWMGQNCD) is the EGF-like 6; calcium-binding domain. An EGF-like 7; calcium-binding domain is found at 450-485 (NINDCLGQCQNDASCRDLVNGYRCICPPGYAGDHCE). The region spanning 487-523 (DIDECASNPCLNGGHCQNEINRFQCLCPTGFSGNLCQ) is the EGF-like 8; calcium-binding domain. 2 consecutive EGF-like domains span residues 525 to 561 (DIDYCEPNPCQNGAQCYNRASDYFCKCPEDYEGKNCS) and 586 to 627 (DTPE…TYCH). Asn559 carries an N-linked (GlcNAc...) asparagine glycan. In terms of domain architecture, EGF-like 11; calcium-binding spans 629-665 (NINDCESNPCKNGGTCIDGVNSYKCICSDGWEGAHCE). The EGF-like 12; calcium-binding domain maps to 667-703 (NINDCSQNPCHYGGTCRDLVNDFYCDCKNGWKGKTCH). EGF-like domains follow at residues 705 to 741 (RDSQCDEATCNNGGTCYDEVDTFKCMCPGGWEGTTCN) and 744 to 780 (RNSSCLPNPCHNGGTCVVNGDSFTCVCKEGWEGPICT). Asn745 carries an N-linked (GlcNAc...) asparagine glycan. 9 cysteine pairs are disulfide-bonded: Cys748-Cys759, Cys753-Cys768, Cys770-Cys779, Cys786-Cys797, Cys791-Cys806, Cys808-Cys817, Cys824-Cys835, Cys829-Cys844, and Cys846-Cys855. An EGF-like 15; calcium-binding domain is found at 782 to 818 (NTNDCSPHPCYNSGTCVDGDNWYRCECAPGFAGPDCR). The EGF-like 16; calcium-binding domain maps to 820–856 (NINECQSSPCAFGATCVDEINGYQCICPPGHSGAKCH). Asn960, Asn991, Asn1045, and Asn1064 each carry an N-linked (GlcNAc...) asparagine glycan. A helical transmembrane segment spans residues 1068–1093 (FLVPLLSSVLTVAWVCCLVTAFYWCV). The Cytoplasmic segment spans residues 1094–1218 (RKRRKPSSHT…QSLNRMEYIV (125 aa)). The tract at residues 1181–1218 (REEKAPSGTPTKHPNWTNKQDNRDLESAQSLNRMEYIV) is disordered. Over residues 1188-1199 (GTPTKHPNWTNK) the composition is skewed to polar residues.

Interacts with NOTCH1, NOTCH2 and NOTCH3. Widely expressed in many tissues, with highest expression in brain, heart, muscle and thymus.

The protein resides in the membrane. Its subcellular location is the cell membrane. Its function is as follows. Ligand for multiple Notch receptors and involved in the mediation of Notch signaling. May be involved in cell-fate decisions during hematopoiesis. Seems to be involved in early and late stages of mammalian cardiovascular development. Inhibits myoblast differentiation. May regulate fibroblast growth factor-induced angiogenesis. This Mus musculus (Mouse) protein is Protein jagged-1 (Jag1).